A 102-amino-acid polypeptide reads, in one-letter code: uncharacterized protein (102 aa).

A helical membrane pass occupies residues 77 to 96 (FFSACVAKSYSSFFISICIL).

The protein resides in the membrane. This is an uncharacterized protein from Saccharomyces cerevisiae (strain ATCC 204508 / S288c) (Baker's yeast).